A 139-amino-acid chain; its full sequence is Ribonuclease P protein component (139 aa).

The segment at 120–139 (KPTTGVEYSPKNEKCESVLP) is disordered. The segment covering 129 to 139 (PKNEKCESVLP) has biased composition (basic and acidic residues).

This sequence belongs to the RnpA family. In terms of assembly, consists of a catalytic RNA component (M1 or rnpB) and a protein subunit.

The catalysed reaction is Endonucleolytic cleavage of RNA, removing 5'-extranucleotides from tRNA precursor.. RNaseP catalyzes the removal of the 5'-leader sequence from pre-tRNA to produce the mature 5'-terminus. It can also cleave other RNA substrates such as 4.5S RNA. The protein component plays an auxiliary but essential role in vivo by binding to the 5'-leader sequence and broadening the substrate specificity of the ribozyme. The chain is Ribonuclease P protein component from Chlamydia caviae (strain ATCC VR-813 / DSM 19441 / 03DC25 / GPIC) (Chlamydophila caviae).